The sequence spans 864 residues: MFGIFDKGQKIKGTVVLMPKNVLDFNAITSIGKGGVIDTATGILGQGVSLVGGVIDTATSFLGRNISMQLISATQTDGSGNGKVGKEVYLEKHLPTLPTLGARQDAFSIFFEWDASFGIPGAFYIKNFMTDEFFLVSVKLEDIPNHGTIEFVCNSWVYNFRSYKKNRIFFVNDTYLPSATPAPLLKYRKEELEVLRGDGTGKRKDFDRIYDYDVYNDLGNPDGGDPRPILGGSSIYPYPRRVRTGRERTRTDPNSEKPGEVYVPRDENFGHLKSSDFLTYGIKSLSHDVIPLFKSAIFQLRVTSSEFESFEDVRSLYEGGIKLPTDILSQISPLPALKEIFRTDGENVLQFPPPHVAKVSKSGWMTDEEFAREVIAGVNPNVIRRLQEFPPKSTLDPTLYGDQTSTITKEQLEINMGGVTVEEALSTQRLFILDYQDAFIPYLTRINSLPTAKAYATRTILFLKDDGTLKPLAIELSKPHPDGDNLGPESIVVLPATEGVDSTIWLLAKAHVIVNDSGYHQLVSHWLNTHAVMEPFAIATNRHLSVLHPIYKLLYPHYRDTININGLARQSLINADGIIEKSFLPGKYSIEMSSSVYKNWVFTDQALPADLVKRGLAIEDPSAPHGLRLVIEDYPYAVDGLEIWDAIKTWVHEYVSLYYPTDAAVQQDTELQAWWKEAVEKGHGDLKEKPWWPKMQTTEDLIQSCSIIVWTASALHAAVNFGQYPYGGLILNRPTLARRFIPAEGTPEYDEMVKNPQKAYLRTITPKFETLIDLSVIEILSRHASDEIYLGERETPNWTTDKKALEAFKRFGSKLTGIEGKINARNSDPSLRNRTGPVQLPYTLLHRSSEEGLTFKGIPNSISI.

The 128-residue stretch at 44–171 (LGQGVSLVGG…SYKKNRIFFV (128 aa)) folds into the PLAT domain. A Lipoxygenase domain is found at 174–864 (TYLPSATPAP…FKGIPNSISI (691 aa)). The segment at 244 to 264 (TGRERTRTDPNSEKPGEVYVP) is disordered. Residues histidine 525, histidine 530, histidine 716, asparagine 720, and isoleucine 864 each coordinate Fe cation.

This sequence belongs to the lipoxygenase family. Monomer. The cofactor is Fe cation. Germinated cotyledons.

The protein resides in the cytoplasm. It carries out the reaction (9Z,12Z)-octadecadienoate + O2 = (9S)-hydroperoxy-(10E,12Z)-octadecadienoate. It participates in lipid metabolism; oxylipin biosynthesis. In terms of biological role, plant lipoxygenase may be involved in a number of diverse aspects of plant physiology including growth and development, pest resistance, and senescence or responses to wounding. It catalyzes the hydroperoxidation of lipids containing a cis,cis-1,4-pentadiene structure. This is Seed linoleate 9S-lipoxygenase (LOX1.4) from Glycine max (Soybean).